An 830-amino-acid polypeptide reads, in one-letter code: Periplasmic nitrate reductase (830 aa).

Residues 1 to 31 constitute a signal peptide (tat-type signal); that stretch reads MKLSRRDFMKANAAVAAAAAAGMTIPTVAKA. In terms of domain architecture, 4Fe-4S Mo/W bis-MGD-type spans 39–95; it reads IKWDKAPCRFCGTGCGVLVGTQNGRIVASQGDPDSPVNRGLNCIKGYFLPKIMYGKD. Positions 46, 49, 53, and 81 each coordinate [4Fe-4S] cluster. Mo-bis(molybdopterin guanine dinucleotide)-binding positions include K83, Q150, N175, C179, 212 to 219, 243 to 247, 262 to 264, M372, Q376, N482, 508 to 509, K531, D558, and 718 to 727; these read WGSNMAEM, STYEH, QTD, SD, and TGRVLEHWHT. F794 is a binding site for substrate. Mo-bis(molybdopterin guanine dinucleotide)-binding residues include N802 and K819.

Belongs to the prokaryotic molybdopterin-containing oxidoreductase family. NasA/NapA/NarB subfamily. Component of the periplasmic nitrate reductase NapAB complex composed of NapA and NapB. Requires [4Fe-4S] cluster as cofactor. The cofactor is Mo-bis(molybdopterin guanine dinucleotide). Predicted to be exported by the Tat system. The position of the signal peptide cleavage has not been experimentally proven.

It is found in the periplasm. The enzyme catalyses 2 Fe(II)-[cytochrome] + nitrate + 2 H(+) = 2 Fe(III)-[cytochrome] + nitrite + H2O. Its function is as follows. Catalytic subunit of the periplasmic nitrate reductase complex NapAB. Receives electrons from NapB and catalyzes the reduction of nitrate to nitrite. This Yersinia pseudotuberculosis serotype IB (strain PB1/+) protein is Periplasmic nitrate reductase.